Consider the following 335-residue polypeptide: Ornithine carbamoyltransferase (335 aa).

Carbamoyl phosphate contacts are provided by residues 57 to 60 (STRT), R108, and 135 to 138 (HPTQ). L-ornithine contacts are provided by residues N168, D232, and 236 to 237 (SM). Carbamoyl phosphate contacts are provided by residues 274–275 (CL) and R319.

It belongs to the aspartate/ornithine carbamoyltransferase superfamily. OTCase family.

It is found in the cytoplasm. The enzyme catalyses carbamoyl phosphate + L-ornithine = L-citrulline + phosphate + H(+). It functions in the pathway amino-acid degradation; L-arginine degradation via ADI pathway; carbamoyl phosphate from L-arginine: step 2/2. In terms of biological role, reversibly catalyzes the transfer of the carbamoyl group from carbamoyl phosphate (CP) to the N(epsilon) atom of ornithine (ORN) to produce L-citrulline. In Limosilactobacillus reuteri (strain DSM 20016) (Lactobacillus reuteri), this protein is Ornithine carbamoyltransferase.